We begin with the raw amino-acid sequence, 187 residues long: Probable chorismate pyruvate-lyase (187 aa).

The substrate site is built by Arg77, Leu115, and Glu174.

The protein belongs to the UbiC family.

The protein localises to the cytoplasm. The catalysed reaction is chorismate = 4-hydroxybenzoate + pyruvate. Its pathway is cofactor biosynthesis; ubiquinone biosynthesis. Its function is as follows. Removes the pyruvyl group from chorismate, with concomitant aromatization of the ring, to provide 4-hydroxybenzoate (4HB) for the ubiquinone pathway. In Shewanella sp. (strain ANA-3), this protein is Probable chorismate pyruvate-lyase.